The chain runs to 122 residues: Large ribosomal subunit protein uL14 (122 aa).

This sequence belongs to the universal ribosomal protein uL14 family. In terms of assembly, part of the 50S ribosomal subunit. Forms a cluster with proteins L3 and L19. In the 70S ribosome, L14 and L19 interact and together make contacts with the 16S rRNA in bridges B5 and B8.

Functionally, binds to 23S rRNA. Forms part of two intersubunit bridges in the 70S ribosome. The protein is Large ribosomal subunit protein uL14 of Sphingopyxis alaskensis (strain DSM 13593 / LMG 18877 / RB2256) (Sphingomonas alaskensis).